A 394-amino-acid chain; its full sequence is Probable tRNA sulfurtransferase (394 aa).

One can recognise a THUMP domain in the interval 61-168 (DETVATLSRI…PMINIYSEEI (108 aa)). Residues 185 to 186 (LL), 210 to 211 (YF), arginine 267, glycine 289, and glutamine 298 contribute to the ATP site.

The protein belongs to the ThiI family.

It is found in the cytoplasm. It catalyses the reaction [ThiI sulfur-carrier protein]-S-sulfanyl-L-cysteine + a uridine in tRNA + 2 reduced [2Fe-2S]-[ferredoxin] + ATP + H(+) = [ThiI sulfur-carrier protein]-L-cysteine + a 4-thiouridine in tRNA + 2 oxidized [2Fe-2S]-[ferredoxin] + AMP + diphosphate. The catalysed reaction is [ThiS sulfur-carrier protein]-C-terminal Gly-Gly-AMP + S-sulfanyl-L-cysteinyl-[cysteine desulfurase] + AH2 = [ThiS sulfur-carrier protein]-C-terminal-Gly-aminoethanethioate + L-cysteinyl-[cysteine desulfurase] + A + AMP + 2 H(+). It functions in the pathway cofactor biosynthesis; thiamine diphosphate biosynthesis. In terms of biological role, catalyzes the ATP-dependent transfer of a sulfur to tRNA to produce 4-thiouridine in position 8 of tRNAs, which functions as a near-UV photosensor. Also catalyzes the transfer of sulfur to the sulfur carrier protein ThiS, forming ThiS-thiocarboxylate. This is a step in the synthesis of thiazole, in the thiamine biosynthesis pathway. The sulfur is donated as persulfide by IscS. This chain is Probable tRNA sulfurtransferase, found in Agathobacter rectalis (strain ATCC 33656 / DSM 3377 / JCM 17463 / KCTC 5835 / VPI 0990) (Eubacterium rectale).